The chain runs to 128 residues: Phycoerythrin alpha-3 chain, chloroplastic (128 aa).

Residues 1–52 (MFAKTLASLAVIGSAAAYVPMMSMDMGRREVVQAGAAAAAVTPFLSGAPAGA) constitute a chloroplast transit peptide. K56 bears the 5-hydroxylysine mark. Residues 70–89 (GCSRAPKESTGGKAGGQDDE) form a disordered region. 15,16-dihydrobiliverdin contacts are provided by residues C71, R73, 77 to 78 (ES), and K93.

The protein belongs to the phycoerythrin family. As to quaternary structure, heterotetramer of 2 different alpha chains and 2 identical beta chains. The subunit composition could comprise of any combination of 2 out of 4 different alpha units with an invariant beta unit. In terms of processing, contains one covalently linked 15,16-dihydrobiliverdin chromophore.

The protein localises to the plastid. The protein resides in the chloroplast thylakoid membrane. In terms of biological role, light-harvesting photosynthetic tetrapyrrole chromophore-protein from the phycobiliprotein complex. This chain is Phycoerythrin alpha-3 chain, chloroplastic (cpeA3), found in Rhodomonas sp. (strain CS 24) (Chroomonas sp. (strain CS24)).